We begin with the raw amino-acid sequence, 468 residues long: RuvB-like helicase 2 (468 aa).

76 to 83 (GPPSTGKT) contributes to the ATP binding site.

This sequence belongs to the RuvB family. May form heterododecamers with RVB1. Component of the SWR1 chromatin remodeling complex, the INO80 chromatin remodeling complex, and of the R2TP complex.

Its subcellular location is the nucleus. The enzyme catalyses ATP + H2O = ADP + phosphate + H(+). DNA helicase which participates in several chromatin remodeling complexes, including the SWR1 and the INO80 complexes. The SWR1 complex mediates the ATP-dependent exchange of histone H2A for the H2A variant HZT1 leading to transcriptional regulation of selected genes by chromatin remodeling. The INO80 complex remodels chromatin by shifting nucleosomes and is involved in DNA repair. Also involved in pre-rRNA processing. This chain is RuvB-like helicase 2 (rvb2), found in Emericella nidulans (strain FGSC A4 / ATCC 38163 / CBS 112.46 / NRRL 194 / M139) (Aspergillus nidulans).